We begin with the raw amino-acid sequence, 187 residues long: UPF0301 protein KPK_0728 (187 aa).

This sequence belongs to the UPF0301 (AlgH) family.

The chain is UPF0301 protein KPK_0728 from Klebsiella pneumoniae (strain 342).